Consider the following 700-residue polypeptide: Glycine--tRNA ligase beta subunit (700 aa).

This sequence belongs to the class-II aminoacyl-tRNA synthetase family. As to quaternary structure, tetramer of two alpha and two beta subunits.

It localises to the cytoplasm. It carries out the reaction tRNA(Gly) + glycine + ATP = glycyl-tRNA(Gly) + AMP + diphosphate. The chain is Glycine--tRNA ligase beta subunit from Helicobacter pylori (strain Shi470).